We begin with the raw amino-acid sequence, 237 residues long: Lipid A 1-diphosphate synthase (237 aa).

Residues methionine 1 to leucine 5 are Cytoplasmic-facing. A helical transmembrane segment spans residues proline 6 to valine 26. The Periplasmic segment spans residues asparagine 27–arginine 62. The chain crosses the membrane as a helical span at residues alanine 63 to glutamate 83. Topologically, residues asparagine 84–arginine 90 are cytoplasmic. A helical membrane pass occupies residues isoleucine 91–alanine 111. The Periplasmic portion of the chain corresponds to leucine 112–serine 145. Lysine 167 is a topological domain (cytoplasmic). Residues valine 168–glycine 188 traverse the membrane as a helical segment. Residues alanine 189–aspartate 194 are Periplasmic-facing. The helical transmembrane segment at isoleucine 195–leucine 215 threads the bilayer. Residues serine 216 to lysine 237 lie on the Cytoplasmic side of the membrane.

It belongs to the LpxT phosphotransferase family.

The protein resides in the cell inner membrane. It catalyses the reaction di-trans,octa-cis-undecaprenyl diphosphate + alpha-Kdo-(2-&gt;4)-alpha-Kdo-(2-&gt;6)-lipid A (E. coli) = (Kdo)2-lipid A 1-diphosphate + di-trans,octa-cis-undecaprenyl phosphate. It participates in bacterial outer membrane biogenesis; lipopolysaccharide biosynthesis. Inhibited by BasR. This regulation does not occur at the level of transcription, but rather following the assembly of LpxT into the inner membrane. Its function is as follows. Involved in the modification of the lipid A domain of lipopolysaccharides (LPS). Transfers a phosphate group from undecaprenyl pyrophosphate (C55-PP) to lipid A to form lipid A 1-diphosphate. Contributes to the recycling of undecaprenyl phosphate (C55-P). In vitro, has low undecaprenyl-diphosphate phosphatase activity. The chain is Lipid A 1-diphosphate synthase from Escherichia coli (strain K12).